A 304-amino-acid polypeptide reads, in one-letter code: Mas-related G-protein coupled receptor member A1 (304 aa).

Residues 1–17 (MDNTIPGGINITILIPN) are Extracellular-facing. N-linked (GlcNAc...) asparagine glycosylation occurs at N10. The chain crosses the membrane as a helical span at residues 18–38 (LMIIIFGLVGLTGNGIVFWLL). At 39-53 (GFCLHRNAFSVYILN) the chain is on the cytoplasmic side. A helical membrane pass occupies residues 54 to 74 (LALADFFFLLGHIIDSILLLL). N75 is a topological domain (extracellular). A helical membrane pass occupies residues 76–96 (VFYPITFLLCFYTIMMVLYIA). At 97 to 131 (GLSMLSAISTERCLSVLCPIWYHCHRPEHTSTVMC) the chain is on the cytoplasmic side. Residues 132–152 (AVIWVLSLLICILNSYFCGFL) traverse the membrane as a helical segment. Residues 153 to 166 (NTQYKNENGCLALN) are Extracellular-facing. Residues 167 to 187 (FFTAAYLMFLFVVLCLSSLAL) form a helical membrane-spanning segment. Residues 188–206 (VARLFCGTGQIKLTRLYVT) are Cytoplasmic-facing. A helical membrane pass occupies residues 207-227 (IILSILVFLLCGLPFGIHWFL). Over 228-243 (LFKIKDDFHVFDLGFY) the chain is Extracellular. The helical transmembrane segment at 244-264 (LASVVLTAINSCANPIIYFFV) threads the bilayer. Over 265–304 (GSFRHRLKHQTLKMVLQNALQDTPETAKIMVEMSRSKSEP) the chain is Cytoplasmic.

The protein belongs to the G-protein coupled receptor 1 family. Mas subfamily. As to expression, expressed in a subset of sensory neurons that includes nociceptors. Expressed in the subclass of non-peptidergic sensory neurons that are IB4(+) and VR1(-).

The protein localises to the cell membrane. Functionally, orphan receptor activated by a subset of RFamide-family neuropeptides such as FLRF-amide and FMRF-amide. Mediates its action by association with G proteins that activate a phosphatidylinositol-calcium second messenger system. Its effect is mediated by G(q) and G(11) proteins. May regulate the function of nociceptive neurons by modulation of pain perception. This chain is Mas-related G-protein coupled receptor member A1 (Mrgpra1), found in Mus musculus (Mouse).